A 220-amino-acid polypeptide reads, in one-letter code: Probable GTP-binding protein EngB (220 aa).

Residues 31-205 (AGVEIAFAGR…LGILNEWCHP (175 aa)) enclose the EngB-type G domain. Residues 39-46 (GRSNAGKS), 66-70 (GRTQL), 84-87 (DLPG), 151-154 (TKAD), and 184-186 (FSS) each bind GTP. The Mg(2+) site is built by S46 and T68.

The protein belongs to the TRAFAC class TrmE-Era-EngA-EngB-Septin-like GTPase superfamily. EngB GTPase family. Mg(2+) serves as cofactor.

Functionally, necessary for normal cell division and for the maintenance of normal septation. In Shewanella sediminis (strain HAW-EB3), this protein is Probable GTP-binding protein EngB.